A 356-amino-acid chain; its full sequence is 11-beta-hydroxysteroid dehydrogenase (356 aa).

Residues 10 to 30 traverse the membrane as a helical; Signal-anchor for type II membrane protein segment; it reads LVVPPAGLLMLAFAWPSLAFF. A Proline-knob motif is present at residues 13–26; that stretch reads PPAGLLMLAFAWPS. 54–85 is a binding site for NADP(+); sequence GASSGIGEQIAYQYAKRRANLVLVARREHRLR. Ser184 serves as a coordination point for substrate. The active-site Proton acceptor is Tyr197. NADP(+) is bound by residues 197 to 201 and Lys201; that span reads YNAAK.

The protein belongs to the short-chain dehydrogenases/reductases (SDR) family. As to expression, expressed in megagametophytes (at protein level).

It is found in the lipid droplet. Its subcellular location is the membrane. It carries out the reaction an 11beta-hydroxysteroid + NADP(+) = an 11-oxosteroid + NADPH + H(+). The catalysed reaction is corticosterone + NADP(+) = 11-dehydrocorticosterone + NADPH + H(+). It catalyses the reaction 17beta-estradiol + NADP(+) = estrone + NADPH + H(+). Its function is as follows. Has dehydrogenase activity against corticosterone (11 beta-hydroxysteroid) and estradiol (17 beta-hydroxysteroid) in the presence of NADP(+). May be involved in signal transduction regulated by various sterols. This is 11-beta-hydroxysteroid dehydrogenase from Pinus massoniana (Chinese red pine).